Consider the following 354-residue polypeptide: MEIGVFIPIGNNGWLISEAAPQYMPSFALNKEIVQKAEKYGFDFALSMIKLRGFGGKTQFWEHNLESFTLMAGLAAVTDRIKIFATAATLTLPPAIVARMASTIDSIAPGRFGINLVTGWQKAEYDQMGLWPGEQHYTDRYNYLAEYATVLRELLETGVSDFKGKYFQMTDCRVSPHPKDTKLICAGSSNEGLAFTAQYADYSFALGKGTNTPTAFGGVNDRLKAAADKTGRDVASYILFMIIADETDEAAMAKWQAYRAGADQEALAWLTNQAAPNAAAGATTNTAQLAAPESAVNLNMGTLVGSYENVARMLDEVAAVEGTAGVLLVFDDFVAGVENFGTKIQPLMTSRAGV.

FMN is bound by residues 49–50 (IK), Asn-115, Glu-124, 140–141 (RY), and Ser-189.

This sequence belongs to the NtaA/SnaA/DszA monooxygenase family. RutA subfamily.

The enzyme catalyses uracil + FMNH2 + NADH + O2 = (Z)-3-ureidoacrylate + FMN + NAD(+) + H2O + H(+). The catalysed reaction is thymine + FMNH2 + NADH + O2 = (Z)-2-methylureidoacrylate + FMN + NAD(+) + H2O + H(+). Its function is as follows. Catalyzes the pyrimidine ring opening between N-3 and C-4 by an unusual flavin hydroperoxide-catalyzed mechanism, adding oxygen atoms in the process to yield ureidoacrylate peracid, that immediately reacts with FMN forming ureidoacrylate and FMN-N(5)-oxide. The FMN-N(5)-oxide reacts spontaneously with NADH to produce FMN. Requires the flavin reductase RutF to regenerate FMN in vivo. In Caulobacter sp. (strain K31), this protein is Pyrimidine monooxygenase RutA.